Here is a 475-residue protein sequence, read N- to C-terminus: Ribulose bisphosphate carboxylase large chain (475 aa).

2 residues coordinate substrate: N123 and T173. Residue K175 is the Proton acceptor of the active site. Position 177 (K177) interacts with substrate. 3 residues coordinate Mg(2+): K201, D203, and E204. K201 bears the N6-carboxylysine mark. The active-site Proton acceptor is H294. Residues R295, H327, and S379 each contribute to the substrate site.

It belongs to the RuBisCO large chain family. Type I subfamily. In terms of assembly, heterohexadecamer of 8 large chains and 8 small chains; disulfide-linked. The disulfide link is formed within the large subunit homodimers. Interacts with assembly factor Raf1 which helps form the holoenzyme, most interaction (and folding) occurs in the cytoplasm. The cofactor is Mg(2+). In terms of processing, the disulfide bond which can form in the large chain dimeric partners within the hexadecamer appears to be associated with oxidative stress and protein turnover.

It localises to the carboxysome. Its subcellular location is the cytoplasm. The catalysed reaction is 2 (2R)-3-phosphoglycerate + 2 H(+) = D-ribulose 1,5-bisphosphate + CO2 + H2O. The enzyme catalyses D-ribulose 1,5-bisphosphate + O2 = 2-phosphoglycolate + (2R)-3-phosphoglycerate + 2 H(+). In terms of biological role, ruBisCO catalyzes two reactions: the carboxylation of D-ribulose 1,5-bisphosphate, the primary event in carbon dioxide fixation, as well as the oxidative fragmentation of the pentose substrate in the photorespiration process. Both reactions occur simultaneously and in competition at the same active site. This chain is Ribulose bisphosphate carboxylase large chain, found in Thermosynechococcus vestitus (strain NIES-2133 / IAM M-273 / BP-1).